We begin with the raw amino-acid sequence, 894 residues long: MTDVTVKSLAAEIQTPVDRLVQQFADAGIDKTAVDSVTQQEKETLLAHLNRDRGAAPNKLTLQRKTRSTLNIPSTGGKSKSVQIEVRKKRTYVQRDPQAQEQAEAEEQARREAEELAQHQVQRDAEEKAKRAAEDKAKREAAEQAKRVAAESDKLTNQQTNTMTKSPQATEKARREAEAAELRRKAEEETRRKVEEKARQVAEEARRMAEERGGNWDNAPEPAEEDTTDYHVNTSHHAREAEDENDRKVEGDRRSRTRGGKATKQKKTSRLSESKADREEARAVGRGGKGKRRPSTLTQGFNKPAQAVNRDVVIGETITVAELANKMAVKGSQVIKAMMKLGAMATINQVIDQETAQLVAEEMGHKVILRRENELEESVMSDRDTGSSAAAESRAPVVTIMGHVDHGKTSLLDYIRSTKVAAGEAGGITQHIGAYHVETDNGMITFLDTPGHAAFTAMRARGAQATDIVVLVVAADDGVMPQTIEAIQHAKAAKVPVVVAVNKIDKPEADPDRVKNELTQYGVIPEEWGGESQFVHVSAKSGAGIDELLDAILLQAEVLELKAIRNGMASGVVIESFLDKGRGPVATVLVREGTLNRGDIVLCGFEYGRVRAMRDEVGRDVASAGPSIPVEILGLSGVPAAGDEATVVRDEKKAREVALYRQGKFREVKLARQQKSKLENMFANMTEGEVSELNIVLKSDVQGSAEAISDALEKLSNDEVKVKIVGSGVGGITETDATLAAASNAILLGFNVRADASARRVIEAENLDLRYYSVIYDLIDEVKQAMSGMLAPEYKQEIIGLAEVRNVFRSPKFGAIAGCMVTEGVVKRHNKIRVLRENVVIYEGELESLRRFKDDVNEVRNGMECGIGVKNYNDVRSGDVIEVFETIEIQRTIA.

The tract at residues Asp52 to Phe301 is disordered. The span at Ser68 to Val82 shows a compositional bias: polar residues. Residues Glu107–Lys154 are compositionally biased toward basic and acidic residues. The span at Leu155–Gln168 shows a compositional bias: polar residues. Basic and acidic residues-rich tracts occupy residues Glu171–Gly214 and His237–Arg254. Basic residues predominate over residues Ser255 to Ser269. A compositionally biased stretch (basic and acidic residues) spans Arg270 to Ala283. A tr-type G domain is found at Ser393–Lys562. A G1 region spans residues Gly402–Thr409. A GTP-binding site is contributed by Gly402–Thr409. The segment at Gly427–His431 is G2. Residues Asp448–Gly451 form a G3 region. Residues Asp448–His452 and Asn502–Asp505 contribute to the GTP site. The G4 stretch occupies residues Asn502–Asp505. The interval Ser538–Lys540 is G5.

Belongs to the TRAFAC class translation factor GTPase superfamily. Classic translation factor GTPase family. IF-2 subfamily.

The protein resides in the cytoplasm. Its function is as follows. One of the essential components for the initiation of protein synthesis. Protects formylmethionyl-tRNA from spontaneous hydrolysis and promotes its binding to the 30S ribosomal subunits. Also involved in the hydrolysis of GTP during the formation of the 70S ribosomal complex. This chain is Translation initiation factor IF-2, found in Sodalis glossinidius (strain morsitans).